The primary structure comprises 471 residues: Glutamate--tRNA ligase 1 (471 aa).

The 'HIGH' region signature appears at 15 to 25 (PSPTGYLHIGG). The 'KMSKS' region motif lies at 243 to 247 (KLSKR). An ATP-binding site is contributed by K246.

The protein belongs to the class-I aminoacyl-tRNA synthetase family. Glutamate--tRNA ligase type 1 subfamily. In terms of assembly, monomer.

It localises to the cytoplasm. The enzyme catalyses tRNA(Glu) + L-glutamate + ATP = L-glutamyl-tRNA(Glu) + AMP + diphosphate. Functionally, catalyzes the attachment of glutamate to tRNA(Glu) in a two-step reaction: glutamate is first activated by ATP to form Glu-AMP and then transferred to the acceptor end of tRNA(Glu). This Dinoroseobacter shibae (strain DSM 16493 / NCIMB 14021 / DFL 12) protein is Glutamate--tRNA ligase 1.